The primary structure comprises 260 residues: Serine hydroxymethyltransferase (260 aa).

K60 carries the N6-(pyridoxal phosphate)lysine modification.

It belongs to the SHMT family. As to quaternary structure, homodimer. Pyridoxal 5'-phosphate is required as a cofactor.

Its subcellular location is the cytoplasm. The catalysed reaction is (6R)-5,10-methylene-5,6,7,8-tetrahydrofolate + glycine + H2O = (6S)-5,6,7,8-tetrahydrofolate + L-serine. Its pathway is one-carbon metabolism; tetrahydrofolate interconversion. It participates in amino-acid biosynthesis; glycine biosynthesis; glycine from L-serine: step 1/1. In terms of biological role, catalyzes the reversible interconversion of serine and glycine with tetrahydrofolate (THF) serving as the one-carbon carrier. This reaction serves as the major source of one-carbon groups required for the biosynthesis of purines, thymidylate, methionine, and other important biomolecules. Also exhibits THF-independent aldolase activity toward beta-hydroxyamino acids, producing glycine and aldehydes, via a retro-aldol mechanism. This is Serine hydroxymethyltransferase from Corynebacterium sp. (strain P-1).